Here is a 316-residue protein sequence, read N- to C-terminus: Ornithine carbamoyltransferase (316 aa).

Carbamoyl phosphate is bound by residues 59–62 (STRT), glutamine 86, arginine 110, and 137–140 (HPCQ). Residues asparagine 168, aspartate 232, and 236–237 (SM) each bind L-ornithine. Carbamoyl phosphate-binding positions include 273 to 274 (CL) and arginine 301.

The protein belongs to the aspartate/ornithine carbamoyltransferase superfamily. OTCase family.

It is found in the cytoplasm. It carries out the reaction carbamoyl phosphate + L-ornithine = L-citrulline + phosphate + H(+). Its pathway is amino-acid biosynthesis; L-arginine biosynthesis; L-arginine from L-ornithine and carbamoyl phosphate: step 1/3. In terms of biological role, reversibly catalyzes the transfer of the carbamoyl group from carbamoyl phosphate (CP) to the N(epsilon) atom of ornithine (ORN) to produce L-citrulline. The protein is Ornithine carbamoyltransferase (argF) of Listeria monocytogenes serovar 1/2a (strain ATCC BAA-679 / EGD-e).